Consider the following 871-residue polypeptide: Metabotropic glutamate receptor 6 (871 aa).

An N-terminal signal peptide occupies residues 1-23 (MGRLRVLLLWLAWWLSQAGIAHG). Topologically, residues 24 to 579 (AGSVRLAGGL…VVRLTWSSPW (556 aa)) are extracellular. An intrachain disulfide couples Cys-51 to Cys-93. L-glutamate-binding positions include Ser-148, 169–171 (AST), and Tyr-219. 7 cysteine pairs are disulfide-bonded: Cys-238-Cys-530, Cys-361-Cys-377, Cys-417-Cys-424, Cys-512-Cys-531, Cys-516-Cys-534, Cys-537-Cys-549, and Cys-552-Cys-565. N-linked (GlcNAc...) asparagine glycosylation occurs at Asn-290. Asp-301 is an L-glutamate binding site. Lys-394 is a binding site for L-glutamate. 2 N-linked (GlcNAc...) asparagine glycosylation sites follow: Asn-445 and Asn-473. Asn-561 carries N-linked (GlcNAc...) asparagine glycosylation. Residues 580 to 602 (AALPLLLAVLGIMATTTIIATFM) traverse the membrane as a helical segment. Topologically, residues 603–616 (RHNDTPIVRASGRE) are cytoplasmic. The helical transmembrane segment at 617–637 (LSYVLLTGIFLIYAITFLMVA) threads the bilayer. Residues 638–648 (EPCAAVCASRR) lie on the Extracellular side of the membrane. Residues 649–667 (LLLGLGTTLSYSALLTKTN) form a helical membrane-spanning segment. The Cytoplasmic segment spans residues 668-691 (RIYRIFEQGKRSVTPPPFISPTSQ). The helical transmembrane segment at 692 to 712 (LVITFGLTSLQVVGVIAWLGA) threads the bilayer. Topologically, residues 713–742 (QPPHSVIDYEEQRTVDPEQARGVLKCDMSD) are extracellular. The chain crosses the membrane as a helical span at residues 743-764 (LSLIGCLGYSLLLMVTCTVYAI). At 765-777 (KARGVPETFNEAK) the chain is on the cytoplasmic side. The helical transmembrane segment at 778–800 (PIGFTMYTTCIIWLAFVPIFFGT) threads the bilayer. At 801–813 (AQSAEKIYIQTTT) the chain is on the extracellular side. Residues 814-839 (LTVSLSLSASVSLGMLYVPKTYVILF) form a helical membrane-spanning segment. Topologically, residues 840–871 (HPEQNVQKRKRSLKKTSTMAAPPKSENSEDAK) are cytoplasmic. Residues 848 to 871 (RKRSLKKTSTMAAPPKSENSEDAK) are disordered.

This sequence belongs to the G-protein coupled receptor 3 family. In terms of assembly, homodimer. Interacts with GPR179. Interacts with photoreceptor synaptic protein LRIT1 (via its N-terminal extracellular domain). As to expression, detected in the outer plexiform layer in retina (at protein level).

The protein localises to the cell membrane. It is found in the endoplasmic reticulum membrane. The protein resides in the golgi apparatus membrane. Its subcellular location is the cell projection. It localises to the dendrite. G-protein coupled receptor for glutamate. Ligand binding causes a conformation change that triggers signaling via guanine nucleotide-binding proteins (G proteins) and modulates the activity of down-stream effectors, such as adenylate cyclase. Signaling inhibits adenylate cyclase activity. Signaling stimulates TRPM1 channel activity and Ca(2+) uptake. Required for normal vision. In Mus musculus (Mouse), this protein is Metabotropic glutamate receptor 6 (Grm6).